The chain runs to 825 residues: MAAGKFASLPRNMPVNHQFPLASSMDLLSSKSPLTEHRPDAYQDVSIHGTLPRKKKGPPPIRSCDDFSHMGTLPHSKSPQQNSPVTQDSIQESPWQDRHCETFTFRDPHLLDPTLEYVKFSKERHIMDRTPEKLKKELEEELLLSSEDLRSHAWYHGRIPRQVSENLVQRDGDFLVRDSLSSPGNFVLTCQWKNLAQHFKINRTVLRLSEAYSRVQYQFEMESFDSIPGLVRCYVGNRRPISQQSGAIIFQPINRTVPLRCLEERYGISPGQAREGSLTEGRPDVTKRLSLTMGGVQAREQNLPRGNLLRNKEKSGSQPACLDHMQDRRALSLKAHQSESYLPIGCKLPPQSSGVDTSPCPNSPVFRTGSEPALSPAVVRRVSSDARAGEALRGSDSQLCPKPPPKPCKVPFLKAPSSPSAWLNSEANYCELNPAFATGCGRGAKLPLCAQGSPTELLTAKQNGALGPRNSGINYLILDDDDRERPWEPAAAQTEKGQWDKGEFVAPLLETVSSFRPNDFKSKFLPPENKPLETAMLKRAKELFTNNDPKVIAQHILSMDCRVARILEVSEEMRRNMGVSSGLELITLPHGHQLRLDIIERHSTMAIGIAVYILGCTGTLEDRAATLSKVIQVAVELKDSMGDLYSFSALMKALEMPQITRLEKTWTALRHQYTQTAILYEKQLKPFSKILHEGRESTCVPPNNVSVPLLMPLVTLMERQAVTFEGTDMWEKNDQSCEIMLNHLATARLMAEATDSYRMNAERILAGFQPDEEMNEICKTEFQMRLLWGSKGAQVNQAERYEKFNQILTALSRKLEPPPVKQAEL.

Residue alanine 2 is modified to N-acetylalanine. The tract at residues 31–93 (KSPLTEHRPD…PVTQDSIQES (63 aa)) is disordered. Phosphoserine occurs at positions 32, 78, 83, 182, and 290. Residues 75 to 93 (HSKSPQQNSPVTQDSIQES) show a composition bias toward polar residues. One can recognise an SH2 domain in the interval 154–253 (WYHGRIPRQV…QSGAIIFQPI (100 aa)). Lysine 334 is modified (N6-methyllysine). Residues serine 358, serine 363, and serine 375 each carry the phosphoserine modification. Arginine 442 is modified (omega-N-methylarginine). Residue serine 471 is modified to Phosphoserine. Residues 548-818 (DPKVIAQHIL…TALSRKLEPP (271 aa)) form the Ras-GEF domain. Positions 744-748 (LATAR) are mediates the interaction with BCAR1/p130CAS.

In terms of assembly, part of a complex comprised of PTPRA, BCAR1, BCAR3 (via SH2 domain) and SRC; the formation of the complex is dependent on integrin mediated-tyrosine phosphorylation of PTPRA. Within the complex, interacts (via SH2 domain) with PTPRA (when phosphorylated on 'Tyr-798'). Interacts (via Ras-GEF domain) with BCAR1. Interacts (via Ras-GEF domain) with NEDD9. Interacts with PTK2/FAK1. Interacts with PTPN1. Interacts (via SH2 domain) with EGFR (when tyrosine-phosphorylated). Post-translationally, phosphorylated on tyrosine residues.

The protein resides in the cytoplasm. The protein localises to the cell junction. Its subcellular location is the focal adhesion. Acts as an adapter protein downstream of several growth factor receptors to promote cell proliferation, migration, and redistribution of actin fibers. Specifically involved in INS/insulin signaling pathway by mediating MAPK1/ERK2-MAPK3/ERK1 activation and DNA synthesis. Promotes insulin-mediated membrane ruffling. In response to vasoconstrictor peptide EDN1, involved in the activation of RAP1 downstream of PTK2B via interaction with phosphorylated BCAR1. Inhibits cell migration and invasion via regulation of TGFB-mediated matrix digestion, actin filament rearrangement, and inhibition of invadopodia activity. May inhibit TGFB-SMAD signaling, via facilitating BCAR1 and SMAD2 and/or SMAD3 interaction. Regulates EGF-induced DNA synthesis. Required for the maintenance of ocular lens morphology and structural integrity, potentially via regulation of focal adhesion complex signaling. Acts upstream of PTPRA to regulate the localization of BCAR1 and PTPRA to focal adhesions, via regulation of SRC-mediated phosphorylation of PTPRA. Positively regulates integrin-induced tyrosine phosphorylation of BCAR1. Acts as a guanine nucleotide exchange factor (GEF) for small GTPases RALA, RAP1A and RRAS. However, in a contrasting study, lacks GEF activity towards RAP1. The sequence is that of Breast cancer anti-estrogen resistance protein 3 homolog (BCAR3) from Macaca fascicularis (Crab-eating macaque).